Reading from the N-terminus, the 696-residue chain is D-(-)-3-hydroxybutyrate oligomer hydrolase (696 aa).

An N-terminal signal peptide occupies residues 1–20 (MTRLGWGRRMVFGAALAAVA). S309 functions as the Charge relay system in the catalytic mechanism.

This sequence belongs to the D-(-)-3-hydroxybutyrate oligomer hydrolase family.

It localises to the secreted. It carries out the reaction (3R)-hydroxybutanoate dimer + H2O = 2 (R)-3-hydroxybutanoate + H(+). It functions in the pathway lipid metabolism; butanoate metabolism. Functionally, participates in the degradation of poly-3-hydroxybutyrate (PHB). It works downstream of poly(3-hydroxybutyrate) depolymerase, hydrolyzing D(-)-3-hydroxybutyrate oligomers of various length (3HB-oligomers) into 3HB-monomers. In Burkholderia lata (strain ATCC 17760 / DSM 23089 / LMG 22485 / NCIMB 9086 / R18194 / 383), this protein is D-(-)-3-hydroxybutyrate oligomer hydrolase.